Consider the following 374-residue polypeptide: MHFPALAVAGCLLSRATAQSLDQVLAKRDSFSLLRDLLHQHGLVDELEFTANATFFAMTNQALRSLADFGINLTTADPNIARAIFKYAQLDAIYTTDTVKALHHEAKVVQTALQPHLFNNLTRGQAAKLRSNRTGGANGILVESGLGVLTPVVEADIPYDHGVIHAIDANMVLPHNISETARLGGMTEFLNLLERSDSVARLESLSDVTIFIPQDEALAKLQPILDMLTSEQLKSVVAQHAVPNRVLYQSLFDGVETLETLDGSTLRIRRGKRGEIFVNGAEVVRTDLLLYGGVAHLIDGALLPEKDASCSTGLFAAAAGGSSRVWKILASHQLTLLAVLAMALVSILYKAYQSRKQSHQLIRPSDGLGNYEKV.

An N-terminal signal peptide occupies residues 1–18 (MHFPALAVAGCLLSRATA). 2 consecutive FAS1 domains span residues 19 to 171 (QSLD…DANM) and 173 to 302 (LPHN…DGAL). N-linked (GlcNAc...) asparagine glycosylation is found at asparagine 52, asparagine 72, asparagine 120, asparagine 132, and asparagine 176. Residues 328–348 (ILASHQLTLLAVLAMALVSIL) traverse the membrane as a helical segment.

Belongs to the fasciclin-like AGP family.

The protein localises to the membrane. It functions in the pathway mycotoxin biosynthesis. Its function is as follows. Fasciclin-like arabinogalactan protein; part of the gene cluster that mediates the biosynthesis of cercosporin, a light-activated, non-host-selective toxin. The perylenequinone chromophore of cercosporin absorbs light energy to attain an electronically-activated triplet state and produces active oxygen species such as the hydroxyl radical, superoxide, hydrogen peroxide or singlet oxygen upon reaction with oxygen molecules. These reactive oxygen species cause damage to various cellular components including lipids, proteins and nucleic acids. The first step of cercosporin biosynthesis is performed by the polyketide synthase CTB1 which catalyzes the formation of nor-toralactone. The starter unit acyltransferase (SAT) domain of CTB1 initiates polyketide extension by the selective utilization of acetyl-CoA, which is elongated to the heptaketide in the beta-ketoacyl synthase (KS) domain by successive condensations with six malonyl units introduced by the malonyl acyltransferase (MAT) domain. The product template (PT) domain catalyzes C4-C9 and C2-C11 aldol cyclizations and dehydrations to a trihydroxynaphthalene, which is thought to be delivered to the thioesterase (TE) domain for product release. The bifunctional enzyme CTB3 then methylates nor-toralactone to toralactone before conducting an unusual oxidative aromatic ring opening. The O-methyltransferase CTB2 further methylates the nascent OH-6 of the CBT3 product, blocking further oxidation at this site before the reductase CTB6 reduces the 2-oxopropyl ketone at position C7, giving naphthalene. The FAD-dependent monooxygenase CTB5 in concert with the multicopper oxidase CTB12 are responsible for homodimerization of naphthalene with CTB7 installing the dioxepine moiety, finally producing cercosporin. The fasciclin domain-containing protein CTB11 might act with CTB5 and CTB12 whereas the roles of CTB9 and CTB10 have still to be elucidated. This is Fasciclin-like arabinogalactan protein CTB11 from Cercospora beticola (Sugarbeet leaf spot fungus).